A 506-amino-acid chain; its full sequence is Methylthioalkylmalate synthase 2, chloroplastic (506 aa).

The N-terminal 49 residues, 1 to 49, are a transit peptide targeting the chloroplast; the sequence is MASSLLTSSGMIPTTGSTVVGRSVLPFQSSLHSLRLTHSYKNPALFISC. Positions 85-359 constitute a Pyruvate carboxyltransferase domain; that stretch reads VRVFDTTLRD…YTRIDTRQIM (275 aa).

This sequence belongs to the alpha-IPM synthase/homocitrate synthase family.

It localises to the plastid. Its subcellular location is the chloroplast. It carries out the reaction an omega-(methylsulfanyl)-2-oxoalkanoate + acetyl-CoA + H2O = a 2-(omega-methylsulfanyl)alkylmalate + CoA + H(+). Functionally, catalyzes only the first methionine chain elongation cycle. The protein is Methylthioalkylmalate synthase 2, chloroplastic (MAM2) of Arabidopsis thaliana (Mouse-ear cress).